Reading from the N-terminus, the 741-residue chain is MAKGTTFIFLFSSLLVLSLSSVSADKDDHGDQQVYIVYLGSLPSREEYTPMSDHMSILQEITGESLIENRLVRSYKKSFNGFAARLTESERKRLAGMERVVSVFPSRKLKLQTTSSWNFMGLKEGIKTKRTRSIESDTIIGVIDSGIYPESDSFSDQGFGPPPKKWKGTCAGGKNFTCNNKVIGARDYTAKSKANQTARDYSGHGTHTASIAAGNAVANSNFYGLGNGTARGGVPAARIAVYKVCDNEGCDGEAMMSAFDDAIADGVDVISISIVLDNIPPFEEDPIAIGAFHAMAVGVLTVNAAGNNGPKISTVTSTAPWVFSVAASVTNRAFMAKVVLGDGKILIGRSVNTYDMNGTNYPLVYGKSAALSTCSVDKARLCEPKCLDGKLVKGKIVLCDSTKGLIEAQKLGAVGSIVKNPEPDRAFIRSFPVSFLSNDDYKSLVSYMNSTKNPKATVLKSEEISNQRAPLVASFSSRGPSSIVSDILKPDITAPGVEILAAYSPDSSPTESEFDTRRVKYSVLSGTSMACPHVAGVAAYVKTFHPQWSPSMIQSAIMTTAWPMNASGSGFVSTEFAYGSGHVDPIDAINPGLVYELTKADHINFLCGLNYTSDHLRIISGDNSTCTKEISKTLPRNLNYPTMSAKVSGTKPFNITFQRTVTNVGMQKSTYNAKVVKFPGSKLSIKVSPRVLSMKSMNEKQSFMVTVSSDSIGTKQPVSANLIWSDGTHNVRSPIIVYAMS.

The signal sequence occupies residues 1–24 (MAKGTTFIFLFSSLLVLSLSSVSA). Residues 25-112 (DKDDHGDQQV…VFPSRKLKLQ (88 aa)) constitute a propeptide, activation peptide. An Inhibitor I9 domain is found at 34 to 111 (VYIVYLGSLP…SVFPSRKLKL (78 aa)). In terms of domain architecture, Peptidase S8 spans 116-589 (SWNFMGLKEG…SGHVDPIDAI (474 aa)). Asp-144 functions as the Charge relay system in the catalytic mechanism. N-linked (GlcNAc...) asparagine glycans are attached at residues Asn-175 and Asn-195. The Charge relay system role is filled by His-204. Asn-227 and Asn-357 each carry an N-linked (GlcNAc...) asparagine glycan. The PA domain maps to 359–445 (TNYPLVYGKS…LSNDDYKSLV (87 aa)). Asn-449 carries an N-linked (GlcNAc...) asparagine glycan. The active-site Charge relay system is Ser-528. Residues Asn-565, Asn-610, Asn-623, and Asn-654 are each glycosylated (N-linked (GlcNAc...) asparagine).

The protein belongs to the peptidase S8 family. The C-terminal propeptide is autocleaved.

It localises to the secreted. The protein is Subtilisin-like protease SBT4.4 of Arabidopsis thaliana (Mouse-ear cress).